A 296-amino-acid chain; its full sequence is Large ribosomal subunit protein uL18A (296 aa).

The disordered stretch occupies residues 251–296; that stretch reads PVHEKKPKKEVKKKRWNRAKLSLEQKKDRVAQKKASFLRAQEKADS. Basic residues predominate over residues 255-268; sequence KKPKKEVKKKRWNR. Residues 271-281 are compositionally biased toward basic and acidic residues; it reads LSLEQKKDRVA.

It belongs to the universal ribosomal protein uL18 family. As to quaternary structure, component of the large ribosomal subunit (LSU). Part of a LSU subcomplex, the 5S RNP which is composed of the 5S RNA, RPL5 and RPL11.

The protein resides in the cytoplasm. The protein localises to the nucleus. It localises to the nucleolus. Component of the ribosome, a large ribonucleoprotein complex responsible for the synthesis of proteins in the cell. The small ribosomal subunit (SSU) binds messenger RNAs (mRNAs) and translates the encoded message by selecting cognate aminoacyl-transfer RNA (tRNA) molecules. The large subunit (LSU) contains the ribosomal catalytic site termed the peptidyl transferase center (PTC), which catalyzes the formation of peptide bonds, thereby polymerizing the amino acids delivered by tRNAs into a polypeptide chain. The nascent polypeptides leave the ribosome through a tunnel in the LSU and interact with protein factors that function in enzymatic processing, targeting, and the membrane insertion of nascent chains at the exit of the ribosomal tunnel. As part of the 5S RNP/5S ribonucleoprotein particle it is an essential component of the LSU, required for its formation and the maturation of rRNAs. It also couples ribosome biogenesis to p53/TP53 activation. As part of the 5S RNP it accumulates in the nucleoplasm and inhibits MDM2, when ribosome biogenesis is perturbed, mediating the stabilization and the activation of TP53. This chain is Large ribosomal subunit protein uL18A (rpl5-a), found in Xenopus laevis (African clawed frog).